The primary structure comprises 382 residues: Cell division protein FtsZ (382 aa).

GTP is bound by residues 21–25 (GGGSN), 108–110 (GTG), Glu-139, Arg-143, and Asp-187. The disordered stretch occupies residues 322-382 (RAQQQSNFNR…FLRNRRRKSR (61 aa)). A compositionally biased stretch (basic and acidic residues) spans 340 to 352 (KSKEKEAEKKEPR).

The protein belongs to the FtsZ family. As to quaternary structure, homodimer. Polymerizes to form a dynamic ring structure in a strictly GTP-dependent manner. Interacts directly with several other division proteins.

The protein localises to the cytoplasm. Essential cell division protein that forms a contractile ring structure (Z ring) at the future cell division site. The regulation of the ring assembly controls the timing and the location of cell division. One of the functions of the FtsZ ring is to recruit other cell division proteins to the septum to produce a new cell wall between the dividing cells. Binds GTP and shows GTPase activity. In Halalkalibacterium halodurans (strain ATCC BAA-125 / DSM 18197 / FERM 7344 / JCM 9153 / C-125) (Bacillus halodurans), this protein is Cell division protein FtsZ.